A 372-amino-acid chain; its full sequence is Chorismate synthase (372 aa).

Arginine 48 is a binding site for NADP(+). FMN contacts are provided by residues 125-127 (RSS), glycine 285, 300-304 (KPTPS), and arginine 327.

Belongs to the chorismate synthase family. FMNH2 is required as a cofactor.

The enzyme catalyses 5-O-(1-carboxyvinyl)-3-phosphoshikimate = chorismate + phosphate. It functions in the pathway metabolic intermediate biosynthesis; chorismate biosynthesis; chorismate from D-erythrose 4-phosphate and phosphoenolpyruvate: step 7/7. In terms of biological role, catalyzes the anti-1,4-elimination of the C-3 phosphate and the C-6 proR hydrogen from 5-enolpyruvylshikimate-3-phosphate (EPSP) to yield chorismate, which is the branch point compound that serves as the starting substrate for the three terminal pathways of aromatic amino acid biosynthesis. This reaction introduces a second double bond into the aromatic ring system. This Methanocella arvoryzae (strain DSM 22066 / NBRC 105507 / MRE50) protein is Chorismate synthase.